The primary structure comprises 312 residues: 2-phospho-L-lactate transferase (312 aa).

Positions 50 and 89 each coordinate 7,8-didemethyl-8-hydroxy-5-deazariboflavin.

It belongs to the CofD family. In terms of assembly, homodimer. It depends on Mg(2+) as a cofactor.

It catalyses the reaction (2S)-lactyl-2-diphospho-5'-guanosine + 7,8-didemethyl-8-hydroxy-5-deazariboflavin = oxidized coenzyme F420-0 + GMP + H(+). The protein operates within cofactor biosynthesis; coenzyme F420 biosynthesis. Catalyzes the transfer of the 2-phospholactate moiety from (2S)-lactyl-2-diphospho-5'-guanosine to 7,8-didemethyl-8-hydroxy-5-deazariboflavin (FO) with the formation of oxidized coenzyme F420-0 and GMP. The sequence is that of 2-phospho-L-lactate transferase from Methanococcus vannielii (strain ATCC 35089 / DSM 1224 / JCM 13029 / OCM 148 / SB).